The primary structure comprises 231 residues: Putative S-adenosylmethionine-dependent methyltransferase RcsF (231 aa).

Residues 5 to 142 enclose the TsaA-like domain; that stretch reads VSPIGYIRSC…YVPYADAVAD (138 aa). S-adenosyl-L-methionine is bound by residues 22 to 24, 63 to 64, arginine 91, and 122 to 125; these read PRQ, HQ, and LDGT.

Belongs to the tRNA methyltransferase O family.

This chain is Putative S-adenosylmethionine-dependent methyltransferase RcsF (rcsF), found in Pseudomonas aeruginosa (strain ATCC 15692 / DSM 22644 / CIP 104116 / JCM 14847 / LMG 12228 / 1C / PRS 101 / PAO1).